The primary structure comprises 502 residues: MAGMLREVCGAAASGLRVRFGPSPTGFLHLGGLRTALYNYVFAKQQRGTFVLRVEDTDQGRVVAGAAESIEDMLHWAGIPPDESPRRGGPFGPYQQSLRLDLYRAASEALLDRGAAYRCFCTPQRLELLRKEALRNQQTPRYDNRCRHLTPKEVAEKLAQGLDWVVRFRLERGVEPFQDLVYGWNKHEVAEVEGDPVILKADGFPTYHLANVVDDHHMGISHVLRGTEWLTSTSKHLLLYKAFGWDPPQFGHLPLLLNKDGSKLSKRQGDIFLERFAQEGYLPEALLDMITNCGSGFAEKQMGRTLEELISQFEIGRITTHSALLDLEKLPEFNRMHLTRHIENEGLRQKLIQELQLLVEDVYGDQEVDKEVLEKEYVEQVLLLRKGHISHLKDLVSDNYSYLWVRPSVSREQLQMISAEVDEIGKLVLGLMTKPAAVWTIEELNKDLRSLQKQTRETKYSSMMKLLRLALSGQQHGPSVAEMMVTLGPREVCGRISKVLSS.

Residues methionine 1–phenylalanine 20 constitute a mitochondrion transit peptide. Arginine 19 to glycine 21 is a binding site for L-glutamate. The 'HIGH' region signature appears at proline 24–glycine 32. An ATP-binding site is contributed by histidine 29. L-glutamate is bound by residues glutamate 55, tyrosine 207–asparagine 211, and arginine 225. Residues glutamate 228 and lysine 263–arginine 267 each bind ATP. The 'KMSKS' region signature appears at lysine 263–arginine 267.

Belongs to the class-I aminoacyl-tRNA synthetase family. Glutamate--tRNA ligase type 1 subfamily.

Its subcellular location is the mitochondrion matrix. It carries out the reaction tRNA(Glx) + L-glutamate + ATP = L-glutamyl-tRNA(Glx) + AMP + diphosphate. The enzyme catalyses tRNA(Glu) + L-glutamate + ATP = L-glutamyl-tRNA(Glu) + AMP + diphosphate. It catalyses the reaction tRNA(Gln) + L-glutamate + ATP = L-glutamyl-tRNA(Gln) + AMP + diphosphate. Functionally, non-discriminating glutamyl-tRNA synthetase that catalyzes aminoacylation of both mitochondrial tRNA(Glu) and tRNA(Gln) and participates in RNA aminoacylation for mitochondrial protein translation. Attachs glutamate to tRNA(Glu) or tRNA(Gln) in a two-step reaction: glutamate is first activated by ATP to form Glu-AMP and then transferred to the acceptor end of tRNA(Glu) or tRNA(Gln). The protein is Nondiscriminating glutamyl-tRNA synthetase EARS2, mitochondrial of Gallus gallus (Chicken).